A 178-amino-acid polypeptide reads, in one-letter code: MFIKYAEVLNLVKNILKSMVGEALIGSGPEVAHIDLVIGPRGGSVEAAFMNSLAMPRQGHTPLLAVLEPNIQPKPTTLIVNKVTIKNVSQAALMFGPAQAAVAKAVMDSVADGVLPEEQADDIFIIVSVFIEWDAKDKDKVYEFNYEATKLAIARAMEGRPTVEEALAKKDSANHPFA.

Catalysis depends on His-33, which acts as the Proton donor. The substrate site is built by Asp-35, Leu-64, Lys-82, Thr-84, and Gln-99.

This sequence belongs to the formaldehyde-activating enzyme family.

The protein resides in the cytoplasm. The catalysed reaction is 5,6,7,8-tetrahydromethanopterin + formaldehyde = 5,10-methylenetetrahydromethanopterin + H2O. In terms of biological role, catalyzes the condensation of formaldehyde with tetrahydromethanopterin (H(4)MPT) to 5,10-methylenetetrahydromethanopterin. The sequence is that of 5,6,7,8-tetrahydromethanopterin hydro-lyase (faeA) from Methanosarcina barkeri (strain Fusaro / DSM 804).